A 428-amino-acid chain; its full sequence is L-gulono-1,4-lactone dehydrogenase (428 aa).

Positions Gln-12–Leu-179 constitute an FAD-binding PCMH-type domain.

It belongs to the oxygen-dependent FAD-linked oxidoreductase family. A divalent metal cation serves as cofactor.

The enzyme catalyses L-gulono-1,4-lactone + 2 Fe(III)-[cytochrome c] = L-ascorbate + 2 Fe(II)-[cytochrome c] + 3 H(+). Its pathway is cofactor biosynthesis; L-ascorbate biosynthesis. Functionally, oxidizes L-gulono-1,4-lactone to L-xylo-hexulonolactone which spontaneously isomerizes to L-ascorbate. The protein is L-gulono-1,4-lactone dehydrogenase of Mycobacterium tuberculosis (strain CDC 1551 / Oshkosh).